The sequence spans 131 residues: MSNDNKRLPIGKDIATRRRVARKARHFRIRKNLRGTAEIPRLVVHRTSRHMHVQVIDDTIGHTLAAASSIEPEVRAMEGDKKARGAKVGELIAERAKAKGIETVKFDRGGYKYHGRVAALADAAREGGLKF.

Belongs to the universal ribosomal protein uL18 family. Part of the 50S ribosomal subunit; part of the 5S rRNA/L5/L18/L25 subcomplex. Contacts the 5S and 23S rRNAs.

In terms of biological role, this is one of the proteins that bind and probably mediate the attachment of the 5S RNA into the large ribosomal subunit, where it forms part of the central protuberance. The polypeptide is Large ribosomal subunit protein uL18 (Corynebacterium kroppenstedtii (strain DSM 44385 / JCM 11950 / CIP 105744 / CCUG 35717)).